We begin with the raw amino-acid sequence, 153 residues long: Transcriptional repressor NrdR (153 aa).

A zinc finger spans residues 3–34 (CPFCHNQDTRVIDSRAAEEGTAIRRRRSCPAC). The ATP-cone domain occupies 46 to 136 (LMVTKRSGAT…VYRSFESLED (91 aa)).

This sequence belongs to the NrdR family. Requires Zn(2+) as cofactor.

Negatively regulates transcription of bacterial ribonucleotide reductase nrd genes and operons by binding to NrdR-boxes. The protein is Transcriptional repressor NrdR of Thermobifida fusca (strain YX).